The following is a 573-amino-acid chain: 3-oxosteroid 1-dehydrogenase (573 aa).

Position 7-36 (7-36 (DLIVVGSGAGACWAPIRAQEQGLKTLVVEK)) interacts with FAD.

The protein belongs to the FAD-dependent oxidoreductase 2 family. 3-oxosteroid dehydrogenase subfamily. FAD serves as cofactor.

Its subcellular location is the cell inner membrane. It catalyses the reaction a 3-oxosteroid + A = a 3-oxo-Delta(1)-steroid + AH2. It participates in lipid metabolism; steroid degradation. Functionally, dehydrogenates steroids by introducing a double bond in steroid ring A. This chain is 3-oxosteroid 1-dehydrogenase, found in Comamonas testosteroni (Pseudomonas testosteroni).